Consider the following 286-residue polypeptide: N-alpha-acetyltransferase 80 (286 aa).

The disordered stretch occupies residues Thr33–Ala54. In terms of domain architecture, N-acetyltransferase spans Leu60–Thr207. Substrate contacts are provided by residues Arg85 and Arg90–Ser93. Acetyl-CoA contacts are provided by residues Val141–Val143, Gly149–Arg154, and Gln179. A disordered region spans residues Phe212 to Thr269. The segment covering Pro236–Pro248 has biased composition (pro residues).

Belongs to the acetyltransferase family. In terms of tissue distribution, strongly expressed in heart and skeletal muscle, followed by brain and pancreas, with weak expression in kidney, liver, and lung and no expression in placenta.

The protein localises to the cytoplasm. It is found in the cytosol. The catalysed reaction is N-terminal L-aspartyl-L-aspartyl-L-aspartyl-[protein] + acetyl-CoA = N-terminal N-acetyl-L-aspartyl-L-aspartyl-L-aspartyl-[protein] + CoA + H(+). The enzyme catalyses N-terminal L-glutamyl-L-glutamyl-L-glutamyl-[protein] + acetyl-CoA = N-terminal N-acetyl-L-glutamyl-L-glutamyl-L-glutamyl-[protein] + CoA + H(+). N-alpha-acetyltransferase that specifically mediates the acetylation of the acidic amino terminus of processed forms of beta- and gamma-actin (ACTB and ACTG, respectively). N-terminal acetylation of processed beta- and gamma-actin regulates actin filament depolymerization and elongation. In vivo, preferentially displays N-terminal acetyltransferase activity towards acid N-terminal sequences starting with Asp-Asp-Asp and Glu-Glu-Glu. In vitro, shows high activity towards Met-Asp-Glu-Leu and Met-Asp-Asp-Asp. May act as a tumor suppressor. The protein is N-alpha-acetyltransferase 80 of Homo sapiens (Human).